A 233-amino-acid polypeptide reads, in one-letter code: 7-cyano-7-deazaguanine synthase 2 (233 aa).

8-18 provides a ligand contact to ATP; sequence LSGGLDSTTCM. C186, C194, C197, and C200 together coordinate Zn(2+).

The protein belongs to the QueC family. As to quaternary structure, homodimer. Zn(2+) serves as cofactor.

The enzyme catalyses 7-carboxy-7-deazaguanine + NH4(+) + ATP = 7-cyano-7-deazaguanine + ADP + phosphate + H2O + H(+). The protein operates within purine metabolism; 7-cyano-7-deazaguanine biosynthesis. Its function is as follows. Catalyzes the ATP-dependent conversion of 7-carboxy-7-deazaguanine (CDG) to 7-cyano-7-deazaguanine (preQ(0)). The protein is 7-cyano-7-deazaguanine synthase 2 of Desulfitobacterium hafniense (strain Y51).